Reading from the N-terminus, the 580-residue chain is Probable glucomannan 4-beta-mannosyltransferase 2 (580 aa).

The segment covering 1–12 (MSTNGGAPSQKR) has biased composition (polar residues). The tract at residues 1–33 (MSTNGGAPSQKRSWLPSRPLLTTTTQTYPPPLL) is disordered. Over residues 15 to 27 (LPSRPLLTTTTQT) the composition is skewed to low complexity. A helical transmembrane segment spans residues 85-105 (AVWACLAMSAMLVAEAAWMGL). The active site involves Asp182. Substrate-binding residues include Asp241 and Asp243. Residue Asp335 is part of the active site. 4 helical membrane passes run 414–434 (AIAPILTFLFYCIVIPLSAMV), 437–457 (VTIPVWGLVYIPTAITIMNAI), 528–548 (IYIPELLLALYLLICASYDFV), and 554–574 (YYIYIYLQAVAFTVMGFGFVG).

This sequence belongs to the glycosyltransferase 2 family. Plant cellulose synthase-like A subfamily.

It is found in the golgi apparatus membrane. It carries out the reaction GDP-mannose + (glucomannan)n = GDP + (glucomannan)n+1.. Functionally, probable mannan synthase which consists of a 4-beta-mannosyltransferase activity on mannan using GDP-mannose. The beta-1,4-mannan product is the backbone for galactomannan synthesis by galactomannan galactosyltransferase. Galactomannan is a noncellulosic polysaccharides of plant cell wall. The sequence is that of Probable glucomannan 4-beta-mannosyltransferase 2 from Oryza sativa subsp. japonica (Rice).